A 329-amino-acid chain; its full sequence is MLKWFIISCCLLTAISYSTYYLFTSNSWIKTVKTHTYSRFYQLIKENTKTQLDRLQEEAKLSGKSLIPPFINFDREYAIAPKYNISICRIKKSMSTLMSGVACVLYDTGKFMRNNRSILEVWSHRFCGEKNEYRRMNEVKWRMGDAHHTFKKIVVIRDPIARFISFFSNKCIFEAQKYPDRKQCYNCQGNVTCFLEKQYERFVQHSSDYSRIRPSYEDKHAAPLSWNCEFGKFLKDYKIIKLAVDPKDRKNGLANLMNVLKESNVPNSTLRFIEKSALEGETMHATYDSDAHDVVKKEIENDKKIREWLKRIYYLDFVIFDFDTTFINS.

Over 1–3 (MLK) the chain is Cytoplasmic. A helical; Signal-anchor for type II membrane protein transmembrane segment spans residues 4-23 (WFIISCCLLTAISYSTYYLF). At 24 to 329 (TSNSWIKTVK…FDFDTTFINS (306 aa)) the chain is on the lumenal side. Residues 91–97 (KKSMSTL) and 157–165 (RDPIARFIS) each bind 3'-phosphoadenylyl sulfate.

This sequence belongs to the sulfotransferase 2 family. As to expression, highly expressed in the head and tail of hermaphrodites, in particular in amphid and phasmid sheath cells.

Its subcellular location is the golgi apparatus membrane. It catalyses the reaction chondroitin beta-D-glucuronate + n 3'-phosphoadenylyl sulfate = chondroitin 4'-sulfate + n adenosine 3',5'-bisphosphate + n H(+). Functionally, catalyzes the transfer of sulfate to position 4 of non-reducing N-acetylgalactosamine (GalNAc) residue of chondroitin. This Caenorhabditis elegans protein is Carbohydrate sulfotransferase chst-1.